The primary structure comprises 383 residues: 8-amino-7-oxononanoate synthase (383 aa).

A substrate-binding site is contributed by Arg-21. Gly-108–Phe-109 provides a ligand contact to pyridoxal 5'-phosphate. His-133 is a substrate binding site. Positions 179, 207, and 233 each coordinate pyridoxal 5'-phosphate. An N6-(pyridoxal phosphate)lysine modification is found at Lys-236. Thr-350 lines the substrate pocket.

This sequence belongs to the class-II pyridoxal-phosphate-dependent aminotransferase family. BioF subfamily. Homodimer. The cofactor is pyridoxal 5'-phosphate.

It catalyses the reaction 6-carboxyhexanoyl-[ACP] + L-alanine + H(+) = (8S)-8-amino-7-oxononanoate + holo-[ACP] + CO2. Its pathway is cofactor biosynthesis; biotin biosynthesis. In terms of biological role, catalyzes the decarboxylative condensation of pimeloyl-[acyl-carrier protein] and L-alanine to produce 8-amino-7-oxononanoate (AON), [acyl-carrier protein], and carbon dioxide. This chain is 8-amino-7-oxononanoate synthase, found in Yersinia enterocolitica serotype O:8 / biotype 1B (strain NCTC 13174 / 8081).